The primary structure comprises 227 residues: Ornithine decarboxylase antizyme 1 (227 aa).

It belongs to the ODC antizyme family. In terms of assembly, interacts with ODC1 and thereby sterically blocks ODC homodimerization. Forms a ternary complex with PSMB4 and OAZ1 before PSMB4 is incorporated into the 20S proteasome. Interacts with AZIN2; this interaction disrupts the interaction between the antizyme and ODC1. Interacts with FAM171A1.

Its function is as follows. Ornithine decarboxylase (ODC) antizyme protein that negatively regulates ODC activity and intracellular polyamine biosynthesis and uptake in response to increased intracellular polyamine levels. Binds to ODC monomers, inhibiting the assembly of the functional ODC homodimer, and targets the monomers for ubiquitin-independent proteolytic destruction by the 26S proteasome. Triggers ODC degradation by inducing the exposure of a cryptic proteasome-interacting surface of ODC. Stabilizes AZIN2 by interfering with its ubiquitination. Also inhibits cellular uptake of polyamines by inactivating the polyamine uptake transporter. SMAD1/OAZ1/PSMB4 complex mediates the degradation of the CREBBP/EP300 repressor SNIP1. Involved in the translocation of AZIN2 from ER-Golgi intermediate compartment (ERGIC) to the cytosol. This Rattus norvegicus (Rat) protein is Ornithine decarboxylase antizyme 1 (Oaz1).